The sequence spans 172 residues: Epididymal secretory protein 4 (172 aa).

A signal peptide spans 1 to 21; sequence MIAVLLLVFGMTPDYIFPVSA. The cysteines at positions 82 and 167 are disulfide-linked.

The protein belongs to the calycin superfamily. Lipocalin family. As to expression, secreted by the epididymal epithelial cells.

It is found in the secreted. The protein resides in the extracellular space. In terms of biological role, could transport small hydrophobic molecules into the epididymal fluid during the sperm maturation. Binds to the head region of spermatozoa and plays a key role in sperm maturation. In Zootoca vivipara (Common lizard), this protein is Epididymal secretory protein 4.